The following is a 397-amino-acid chain: S-adenosylmethionine synthase (397 aa).

His-15 contacts ATP. Asp-17 is a Mg(2+) binding site. Position 43 (Glu-43) interacts with K(+). L-methionine-binding residues include Glu-56 and Gln-99. The segment at 99–109 (QSPDIAMGVNK) is flexible loop. ATP is bound by residues 175 to 177 (DGK), 241 to 242 (RF), Asp-250, 256 to 257 (RK), Ala-273, and Lys-277. Position 250 (Asp-250) interacts with L-methionine. An L-methionine-binding site is contributed by Lys-281.

The protein belongs to the AdoMet synthase family. Homotetramer; dimer of dimers. Mg(2+) is required as a cofactor. The cofactor is K(+).

Its subcellular location is the cytoplasm. It catalyses the reaction L-methionine + ATP + H2O = S-adenosyl-L-methionine + phosphate + diphosphate. Its pathway is amino-acid biosynthesis; S-adenosyl-L-methionine biosynthesis; S-adenosyl-L-methionine from L-methionine: step 1/1. Catalyzes the formation of S-adenosylmethionine (AdoMet) from methionine and ATP. The overall synthetic reaction is composed of two sequential steps, AdoMet formation and the subsequent tripolyphosphate hydrolysis which occurs prior to release of AdoMet from the enzyme. The chain is S-adenosylmethionine synthase from Acetivibrio thermocellus (strain ATCC 27405 / DSM 1237 / JCM 9322 / NBRC 103400 / NCIMB 10682 / NRRL B-4536 / VPI 7372) (Clostridium thermocellum).